A 292-amino-acid chain; its full sequence is Chronophin (292 aa).

The active-site Nucleophile is the aspartate 25. Mg(2+)-binding residues include aspartate 25 and aspartate 27. Residue aspartate 27 is the Proton donor of the active site. Substrate is bound by residues serine 58–asparagine 60, histidine 178, and lysine 209. Aspartate 234 serves as a coordination point for Mg(2+).

The protein belongs to the HAD-like hydrolase superfamily. As to quaternary structure, homodimer. It depends on Mg(2+) as a cofactor. In terms of tissue distribution, ubiquitous. highly expressed in brain (at protein level).

Its subcellular location is the cytoplasm. The protein resides in the cytosol. It localises to the cytoskeleton. The protein localises to the cell projection. It is found in the ruffle membrane. Its subcellular location is the lamellipodium membrane. The protein resides in the cell membrane. The enzyme catalyses pyridoxal 5'-phosphate + H2O = pyridoxal + phosphate. The catalysed reaction is pyridoxine 5'-phosphate + H2O = pyridoxine + phosphate. It carries out the reaction pyridoxamine + phosphate = pyridoxamine 5'-phosphate + H2O. It catalyses the reaction O-phospho-L-seryl-[protein] + H2O = L-seryl-[protein] + phosphate. Its activity is regulated as follows. Inhibited by beryllium trifluoride. Functions as a pyridoxal phosphate (PLP) phosphatase, which also catalyzes the dephosphorylation of pyridoxine 5'-phosphate (PNP) and pyridoxamine 5'-phosphate (PMP), with order of substrate preference PLP &gt; PNP &gt; PMP and therefore plays a role in vitamin B6 metabolism. Also functions as a protein serine phosphatase that specifically dephosphorylates 'Ser-3' in proteins of the actin-depolymerizing factor (ADF)/cofilin family like CFL1 and DSTN. Thereby, regulates cofilin-dependent actin cytoskeleton reorganization, being required for normal progress through mitosis and normal cytokinesis. Does not dephosphorylate phosphothreonines in LIMK1. Does not dephosphorylate peptides containing phosphotyrosine. This chain is Chronophin, found in Mus musculus (Mouse).